The following is a 525-amino-acid chain: Nucleolar and spindle-associated protein 1-A (525 aa).

Disordered stretches follow at residues Glu46–Ala205, Glu248–Ala292, Thr373–Ala397, and Ser451–Gln525. Positions Ser58–Ser69 are enriched in polar residues. Positions Thr82 to Leu92 are enriched in basic residues. Over residues Ser106–Leu127 the composition is skewed to polar residues. The span at Thr160 to Ser169 shows a compositional bias: basic and acidic residues. The segment covering Pro270–Arg285 has biased composition (polar residues). Residues Cys476–Leu494 are compositionally biased toward polar residues. Positions Gln495–Gln514 are enriched in basic and acidic residues.

This sequence belongs to the NUSAP family. Interacts with DNA. Interacts with microtubules, ipo7, kpna2 and kpnb1. Microtubule stabilization is inhibited by ipo7 and kpna2, while microtubule bundling is inhibited by kpnb1. Active GTP-bound ran causes dissociation of ipo7 and kpnb1.

Its subcellular location is the cytoplasm. It localises to the nucleus. It is found in the cytoskeleton. The protein localises to the spindle. Its function is as follows. Microtubule-associated protein with the capacity to bundle and stabilize microtubules. May associate with chromosomes and promote the organization of meiotic or mitotic spindle microtubules around them. This is Nucleolar and spindle-associated protein 1-A (nusap1-a) from Xenopus laevis (African clawed frog).